We begin with the raw amino-acid sequence, 73 residues long: Large ribosomal subunit protein bL31 (73 aa).

The Zn(2+) site is built by C16, C18, C36, and C39.

It belongs to the bacterial ribosomal protein bL31 family. Type A subfamily. In terms of assembly, part of the 50S ribosomal subunit. The cofactor is Zn(2+).

Its function is as follows. Binds the 23S rRNA. This chain is Large ribosomal subunit protein bL31, found in Myxococcus xanthus (strain DK1622).